The primary structure comprises 89 residues: Small ribosomal subunit protein uS15 (89 aa).

This sequence belongs to the universal ribosomal protein uS15 family. In terms of assembly, part of the 30S ribosomal subunit. Forms a bridge to the 50S subunit in the 70S ribosome, contacting the 23S rRNA.

Functionally, one of the primary rRNA binding proteins, it binds directly to 16S rRNA where it helps nucleate assembly of the platform of the 30S subunit by binding and bridging several RNA helices of the 16S rRNA. Its function is as follows. Forms an intersubunit bridge (bridge B4) with the 23S rRNA of the 50S subunit in the ribosome. The polypeptide is Small ribosomal subunit protein uS15 (Porphyromonas gingivalis (strain ATCC 33277 / DSM 20709 / CIP 103683 / JCM 12257 / NCTC 11834 / 2561)).